The sequence spans 510 residues: NAD(P)H-quinone oxidoreductase subunit 2 B, chloroplastic (510 aa).

Transmembrane regions (helical) follow at residues 31-51 (FIFP…IDLT), 59-79 (WFYF…LFRW), 99-119 (IFQF…VEYI), 124-144 (MAIT…MFLC), 149-169 (LITI…LSGY), 184-204 (LLMG…LYGL), 229-249 (ISIA…LAPF), 261-281 (PTPV…ALAT), 295-315 (WHLL…LLAI), 323-343 (MLAY…IVGD), 354-374 (YMLF…LFGL), 395-415 (ALSL…AGFF), 418-438 (LYLF…IGLL), and 484-504 (MTVC…ILAI).

Belongs to the complex I subunit 2 family. NDH is composed of at least 16 different subunits, 5 of which are encoded in the nucleus.

It is found in the plastid. Its subcellular location is the chloroplast thylakoid membrane. The catalysed reaction is a plastoquinone + NADH + (n+1) H(+)(in) = a plastoquinol + NAD(+) + n H(+)(out). The enzyme catalyses a plastoquinone + NADPH + (n+1) H(+)(in) = a plastoquinol + NADP(+) + n H(+)(out). NDH shuttles electrons from NAD(P)H:plastoquinone, via FMN and iron-sulfur (Fe-S) centers, to quinones in the photosynthetic chain and possibly in a chloroplast respiratory chain. The immediate electron acceptor for the enzyme in this species is believed to be plastoquinone. Couples the redox reaction to proton translocation, and thus conserves the redox energy in a proton gradient. This chain is NAD(P)H-quinone oxidoreductase subunit 2 B, chloroplastic, found in Hordeum vulgare (Barley).